Here is a 328-residue protein sequence, read N- to C-terminus: UPF0324 membrane protein AF_1621 (328 aa).

A run of 11 helical transmembrane segments spans residues 21–39 (LQML…IINL), 43–60 (ALEP…AGNL), 73–95 (YVPF…PYLG), 101–123 (IVAA…SSRL), 130–152 (SILL…SPLI), 162–184 (AIMI…AHYA), 191–213 (FAVL…QLFG), 223–240 (GIRI…SIIY), 245–267 (FYVP…YLPG), 271–293 (QALR…YTVN), and 305–327 (LFAS…GSGA).

Belongs to the UPF0324 family.

The protein resides in the cell membrane. This Archaeoglobus fulgidus (strain ATCC 49558 / DSM 4304 / JCM 9628 / NBRC 100126 / VC-16) protein is UPF0324 membrane protein AF_1621.